The chain runs to 419 residues: Gamma-glutamyl phosphate reductase (419 aa).

The protein belongs to the gamma-glutamyl phosphate reductase family.

The protein resides in the cytoplasm. The catalysed reaction is L-glutamate 5-semialdehyde + phosphate + NADP(+) = L-glutamyl 5-phosphate + NADPH + H(+). It functions in the pathway amino-acid biosynthesis; L-proline biosynthesis; L-glutamate 5-semialdehyde from L-glutamate: step 2/2. Functionally, catalyzes the NADPH-dependent reduction of L-glutamate 5-phosphate into L-glutamate 5-semialdehyde and phosphate. The product spontaneously undergoes cyclization to form 1-pyrroline-5-carboxylate. This is Gamma-glutamyl phosphate reductase from Solidesulfovibrio magneticus (strain ATCC 700980 / DSM 13731 / RS-1) (Desulfovibrio magneticus).